The chain runs to 272 residues: Bifunctional protein FolD 2 (272 aa).

NADP(+) contacts are provided by residues 157–159 (GRS), Thr-182, and Ile-223.

This sequence belongs to the tetrahydrofolate dehydrogenase/cyclohydrolase family. In terms of assembly, homodimer.

It catalyses the reaction (6R)-5,10-methylene-5,6,7,8-tetrahydrofolate + NADP(+) = (6R)-5,10-methenyltetrahydrofolate + NADPH. It carries out the reaction (6R)-5,10-methenyltetrahydrofolate + H2O = (6R)-10-formyltetrahydrofolate + H(+). It participates in one-carbon metabolism; tetrahydrofolate interconversion. Catalyzes the oxidation of 5,10-methylenetetrahydrofolate to 5,10-methenyltetrahydrofolate and then the hydrolysis of 5,10-methenyltetrahydrofolate to 10-formyltetrahydrofolate. The sequence is that of Bifunctional protein FolD 2 from Syntrophomonas wolfei subsp. wolfei (strain DSM 2245B / Goettingen).